Consider the following 289-residue polypeptide: 4-diphosphocytidyl-2-C-methyl-D-erythritol kinase (289 aa).

The active site involves Lys10. 95 to 105 is a binding site for ATP; it reads PVSAGMGGGSA. Asp137 is an active-site residue.

It belongs to the GHMP kinase family. IspE subfamily.

The enzyme catalyses 4-CDP-2-C-methyl-D-erythritol + ATP = 4-CDP-2-C-methyl-D-erythritol 2-phosphate + ADP + H(+). The protein operates within isoprenoid biosynthesis; isopentenyl diphosphate biosynthesis via DXP pathway; isopentenyl diphosphate from 1-deoxy-D-xylulose 5-phosphate: step 3/6. In terms of biological role, catalyzes the phosphorylation of the position 2 hydroxy group of 4-diphosphocytidyl-2C-methyl-D-erythritol. This Ligilactobacillus salivarius (strain UCC118) (Lactobacillus salivarius) protein is 4-diphosphocytidyl-2-C-methyl-D-erythritol kinase.